The primary structure comprises 63 residues: Protease 2 small chain (63 aa).

A Peptidase S8 domain is found at 11 to 63 (QWGLSGTYGIRANTAWDNGYQGQGKIIAVVDTGITDHPDLLANRTSPLGYDFI).

This sequence belongs to the peptidase S8 family. In terms of assembly, heterodimer of a large and a small chain.

The protein resides in the secreted. The polypeptide is Protease 2 small chain (Achromobacter lyticus).